The sequence spans 677 residues: Pre-mRNA-splicing factor CLF1 (677 aa).

16 HAT repeats span residues 52–84, 86–118, 120–152, 154–185, 187–218, 220–255, 257–291, 301–333, 335–369, 379–415, 417–448, 450–482, 484–518, 520–551, 570–608, and 613–646; these read EYQGRKRKEFEDYVRRNRISMNNWMRYAQWELE, KEFRRARSVFERALDVDPTAVVLWIRYIEAEMK, RNINHARNLLDRAVTIYSRVDKLWYKYVYMEEM, GNIPGTRQVFERWMSWEPDEGAWGAYIKLEKR, NEFDRVRAIFERFTVVHPEPKNWIKWARFEEE, GTSDMVREVYGLAIETLGEDFMDEKLFIAYARYEAK, KEFERARAIYKYALDRLPRAKSVALHKAYTTFEKQ, VILSKRRVQYEEQIKENPKNYDIWFDFVRLEES, GDVERVRDVYERAIAQMPPSQEKRHWRRYIYLWIF, KDMERAHQIYQECIRLIPHKKFTFAKIWLMKAQFEIR, MDLQAARKTLGHAIGACPKDKLFKGYIDLERQ, FEFVRCRKLFEKQIEWSPSNCQAWIKFAELERG, DDIDRARAIYELGISQPVLDMPELLWKSYIDFEEY, GEYDRTRALYERLLEKTNHVKVWINFARFEIN, EAKRRARMVFERAHKVFKEKEMKEERVALLNAWKSFEQT, and DDIAKIERQMPSKVKKRRKLDDDRYEEYLDYMFP.

This sequence belongs to the crooked-neck family. As to quaternary structure, associated with the spliceosome.

It localises to the nucleus. Involved in pre-mRNA splicing and cell cycle progression. Required for the spliceosome assembly and initiation of the DNA replication. This is Pre-mRNA-splicing factor CLF1 (CLF1) from Paracoccidioides brasiliensis.